A 405-amino-acid chain; its full sequence is 3-isopropylmalate dehydrogenase (405 aa).

86–104 (GAANTVWTTPDGRTDVRPE) provides a ligand contact to NAD(+). 4 residues coordinate substrate: Arg111, Arg121, Arg148, and Asp237. Residues Asp237, Asp262, and Asp266 each coordinate Mg(2+). NAD(+) is bound at residue 301-312 (GSAPDLGKQKVN). Positions 352-371 (ADIGGSSSTSEVGDLLPTRS) are disordered.

This sequence belongs to the isocitrate and isopropylmalate dehydrogenases family. In terms of assembly, homodimer. Mg(2+) serves as cofactor. Requires Mn(2+) as cofactor.

Its subcellular location is the cytoplasm. It catalyses the reaction (2R,3S)-3-isopropylmalate + NAD(+) = 4-methyl-2-oxopentanoate + CO2 + NADH. It functions in the pathway amino-acid biosynthesis; L-leucine biosynthesis; L-leucine from 3-methyl-2-oxobutanoate: step 3/4. In terms of biological role, catalyzes the oxidation of 3-carboxy-2-hydroxy-4-methylpentanoate (3-isopropylmalate) to 3-carboxy-4-methyl-2-oxopentanoate. The product decarboxylates to 4-methyl-2 oxopentanoate. This is 3-isopropylmalate dehydrogenase (LEU2) from Yarrowia lipolytica (strain CLIB 122 / E 150) (Yeast).